An 800-amino-acid chain; its full sequence is Phenylalanine--tRNA ligase beta subunit (800 aa).

The 109-residue stretch at 39 to 147 (FDAIADIVVG…QDSVPGVRLV (109 aa)) folds into the tRNA-binding domain. One can recognise a B5 domain in the interval 401–477 (WQAAQLRFRP…RVYGMDNIPP (77 aa)). Mg(2+) is bound by residues D455, D461, E464, and E465. An FDX-ACB domain is found at 706 to 800 (PVFPPVKRDI…SLTEALGVRI (95 aa)).

The protein belongs to the phenylalanyl-tRNA synthetase beta subunit family. Type 1 subfamily. In terms of assembly, tetramer of two alpha and two beta subunits. The cofactor is Mg(2+).

Its subcellular location is the cytoplasm. It catalyses the reaction tRNA(Phe) + L-phenylalanine + ATP = L-phenylalanyl-tRNA(Phe) + AMP + diphosphate + H(+). In Oleidesulfovibrio alaskensis (strain ATCC BAA-1058 / DSM 17464 / G20) (Desulfovibrio alaskensis), this protein is Phenylalanine--tRNA ligase beta subunit.